We begin with the raw amino-acid sequence, 474 residues long: MTKKLHIKTWGCQMNEYDSSKMADLLASTHGYQLTTIPEEADLLLLNTCSIREKAQEKVFSLLGQWKLLKEKNPQLIIGVGGCVASQEGEQLRQRAPCVDVIFGPQTLHRLPEMINHVQGTNSPVVDISFPEIEKFDRLPEPRAEGPTAFVSIMEGCNKYCTFCVVPYTRGEEVSRPSDDILFEIAQLAAQGVREVNLLGQNVNAYRGATYDGDICSFAELLRLVAAIDGIDRVRFTTSHPIEFTDDIIDVYRDTPELVSFLHLPVQSGSDRILTMMKRAHTALEYKAIIRKLRQARPDIQISSDFIVGFPGETQQDFEQTMKLVADIHFDTSYSFIYSPRPGTPAADLPDNVSEEEKKQRLHILQQRISQQAMEISRKMVGTVQRVLVEGTSRKNVMELAGRTENNRVVNFEGSPDMIGKFVDVEIVNVYASSLRGILLRTEDQMDLRTHESPQSVIARTRKENEIGVGIYQP.

The MTTase N-terminal domain occupies 3–120; it reads KKLHIKTWGC…LPEMINHVQG (118 aa). Positions 12, 49, 83, 157, 161, and 164 each coordinate [4Fe-4S] cluster. The region spanning 143 to 375 is the Radical SAM core domain; sequence RAEGPTAFVS…QQRISQQAME (233 aa). Residues 378 to 441 enclose the TRAM domain; sequence RKMVGTVQRV…ASSLRGILLR (64 aa).

It belongs to the methylthiotransferase family. MiaB subfamily. In terms of assembly, monomer. It depends on [4Fe-4S] cluster as a cofactor.

The protein localises to the cytoplasm. The enzyme catalyses N(6)-dimethylallyladenosine(37) in tRNA + (sulfur carrier)-SH + AH2 + 2 S-adenosyl-L-methionine = 2-methylsulfanyl-N(6)-dimethylallyladenosine(37) in tRNA + (sulfur carrier)-H + 5'-deoxyadenosine + L-methionine + A + S-adenosyl-L-homocysteine + 2 H(+). Functionally, catalyzes the methylthiolation of N6-(dimethylallyl)adenosine (i(6)A), leading to the formation of 2-methylthio-N6-(dimethylallyl)adenosine (ms(2)i(6)A) at position 37 in tRNAs that read codons beginning with uridine. The protein is tRNA-2-methylthio-N(6)-dimethylallyladenosine synthase of Yersinia pestis bv. Antiqua (strain Angola).